A 118-amino-acid polypeptide reads, in one-letter code: Small ribosomal subunit protein uS13 (118 aa).

The interval 95-118 (LPLRGQRTRTNARTRKGPRKAIKK) is disordered.

This sequence belongs to the universal ribosomal protein uS13 family. Part of the 30S ribosomal subunit. Forms a loose heterodimer with protein S19. Forms two bridges to the 50S subunit in the 70S ribosome.

In terms of biological role, located at the top of the head of the 30S subunit, it contacts several helices of the 16S rRNA. In the 70S ribosome it contacts the 23S rRNA (bridge B1a) and protein L5 of the 50S subunit (bridge B1b), connecting the 2 subunits; these bridges are implicated in subunit movement. Contacts the tRNAs in the A and P-sites. The chain is Small ribosomal subunit protein uS13 from Xylella fastidiosa (strain 9a5c).